The following is a 327-amino-acid chain: UDP-glucose 4-epimerase (327 aa).

Thr-119 provides a ligand contact to substrate. Tyr-143 functions as the Proton acceptor in the catalytic mechanism.

This sequence belongs to the NAD(P)-dependent epimerase/dehydratase family. NAD(+) serves as cofactor.

It catalyses the reaction UDP-alpha-D-glucose = UDP-alpha-D-galactose. It functions in the pathway carbohydrate metabolism; galactose metabolism. Its pathway is glycan metabolism; exopolysaccharide biosynthesis. This is UDP-glucose 4-epimerase (exoB) from Rhizobium leguminosarum bv. trifolii.